A 257-amino-acid chain; its full sequence is Small ribosomal subunit protein uS3 (257 aa).

One can recognise a KH type-2 domain in the interval 40–110; sequence IRKYLSTKYK…LVSLKVVEVQ (71 aa). Positions 223–257 are disordered; that stretch reads ANKEFSRSSKPKKGSFNRSSRSKNTKPAPKQAVSE. Positions 231-246 are enriched in basic residues; that stretch reads SKPKKGSFNRSSRSKN.

The protein belongs to the universal ribosomal protein uS3 family. In terms of assembly, part of the 30S ribosomal subunit. Forms a tight complex with proteins S10 and S14.

Its function is as follows. Binds the lower part of the 30S subunit head. Binds mRNA in the 70S ribosome, positioning it for translation. This Ureaplasma parvum serovar 3 (strain ATCC 27815 / 27 / NCTC 11736) protein is Small ribosomal subunit protein uS3.